Reading from the N-terminus, the 334-residue chain is Nucleoid-associated protein YPK_2796 (334 aa).

Belongs to the YejK family.

Its subcellular location is the cytoplasm. The protein resides in the nucleoid. The sequence is that of Nucleoid-associated protein YPK_2796 from Yersinia pseudotuberculosis serotype O:3 (strain YPIII).